The chain runs to 206 residues: Holliday junction branch migration complex subunit RuvA (206 aa).

Residues Met-1–Ile-64 are domain I. The domain II stretch occupies residues Asp-65 to Ala-142. The flexible linker stretch occupies residues Thr-143–Pro-154. The domain III stretch occupies residues Ser-155–Ala-206.

It belongs to the RuvA family. Homotetramer. Forms an RuvA(8)-RuvB(12)-Holliday junction (HJ) complex. HJ DNA is sandwiched between 2 RuvA tetramers; dsDNA enters through RuvA and exits via RuvB. An RuvB hexamer assembles on each DNA strand where it exits the tetramer. Each RuvB hexamer is contacted by two RuvA subunits (via domain III) on 2 adjacent RuvB subunits; this complex drives branch migration. In the full resolvosome a probable DNA-RuvA(4)-RuvB(12)-RuvC(2) complex forms which resolves the HJ.

The protein localises to the cytoplasm. Its function is as follows. The RuvA-RuvB-RuvC complex processes Holliday junction (HJ) DNA during genetic recombination and DNA repair, while the RuvA-RuvB complex plays an important role in the rescue of blocked DNA replication forks via replication fork reversal (RFR). RuvA specifically binds to HJ cruciform DNA, conferring on it an open structure. The RuvB hexamer acts as an ATP-dependent pump, pulling dsDNA into and through the RuvAB complex. HJ branch migration allows RuvC to scan DNA until it finds its consensus sequence, where it cleaves and resolves the cruciform DNA. The sequence is that of Holliday junction branch migration complex subunit RuvA from Teredinibacter turnerae (strain ATCC 39867 / T7901).